A 234-amino-acid chain; its full sequence is Phosphoribosylaminoimidazole-succinocarboxamide synthase (234 aa).

Belongs to the SAICAR synthetase family.

It carries out the reaction 5-amino-1-(5-phospho-D-ribosyl)imidazole-4-carboxylate + L-aspartate + ATP = (2S)-2-[5-amino-1-(5-phospho-beta-D-ribosyl)imidazole-4-carboxamido]succinate + ADP + phosphate + 2 H(+). It functions in the pathway purine metabolism; IMP biosynthesis via de novo pathway; 5-amino-1-(5-phospho-D-ribosyl)imidazole-4-carboxamide from 5-amino-1-(5-phospho-D-ribosyl)imidazole-4-carboxylate: step 1/2. This Staphylococcus aureus (strain COL) protein is Phosphoribosylaminoimidazole-succinocarboxamide synthase.